The sequence spans 114 residues: Fumarate reductase subunit D (114 aa).

The next 3 membrane-spanning stretches (helical) occupy residues 24–44 (VSAI…PFGL), 50–70 (LITF…TIFP), and 92–112 (GGFI…FAVI).

The protein belongs to the FrdD family. As to quaternary structure, part of an enzyme complex containing four subunits: a flavoprotein (FrdA), an iron-sulfur protein (FrdB), and two hydrophobic anchor proteins (FrdC and FrdD).

Its subcellular location is the cell inner membrane. Its function is as follows. Anchors the catalytic components of the fumarate reductase complex to the cell membrane, binds quinones. The protein is Fumarate reductase subunit D of Haemophilus influenzae (strain ATCC 51907 / DSM 11121 / KW20 / Rd).